A 322-amino-acid polypeptide reads, in one-letter code: Fructose-1,6-bisphosphatase class 1 3 (322 aa).

Mg(2+) is bound by residues Glu-84, Asp-103, Leu-105, and Asp-106. Substrate-binding positions include 106-109 (DGSS), Asn-198, and Lys-262. Glu-268 serves as a coordination point for Mg(2+).

Belongs to the FBPase class 1 family. In terms of assembly, homotetramer. Requires Mg(2+) as cofactor.

Its subcellular location is the cytoplasm. The enzyme catalyses beta-D-fructose 1,6-bisphosphate + H2O = beta-D-fructose 6-phosphate + phosphate. It functions in the pathway carbohydrate biosynthesis; gluconeogenesis. The sequence is that of Fructose-1,6-bisphosphatase class 1 3 from Pseudoalteromonas translucida (strain TAC 125).